A 504-amino-acid chain; its full sequence is Maturase K (504 aa).

This sequence belongs to the intron maturase 2 family. MatK subfamily.

It is found in the plastid. Its subcellular location is the chloroplast. In terms of biological role, usually encoded in the trnK tRNA gene intron. Probably assists in splicing its own and other chloroplast group II introns. The chain is Maturase K from Vigna unguiculata (Cowpea).